A 608-amino-acid chain; its full sequence is Myosin light chain kinase 2, skeletal/cardiac muscle (608 aa).

The disordered stretch occupies residues 1 to 160; it reads MATENGAVEL…RGSPAFLHSP (160 aa). Ala2 carries the post-translational modification N-acetylalanine. Basic and acidic residues-rich tracts occupy residues 31–43 and 50–63; these read AAEK…DPEK and TKQD…KKDA. A compositionally biased stretch (gly residues) spans 82-91; it reads GSQGPAGEGG. Positions 116 to 127 are enriched in basic and acidic residues; sequence ASEKKPEAEKGP. Phosphoserine occurs at positions 153, 159, and 161. Positions 214 to 235 are disordered; the sequence is QKEAGEKAPGQADQAKVQGDTS. A Protein kinase domain is found at 297–552; the sequence is MNSKEALGGG…AAQCLAHPWL (256 aa). ATP-binding positions include 303-311 and Lys326; that span reads LGGGKFGAV. Asp418 functions as the Proton acceptor in the catalytic mechanism. Thr457 carries the phosphothreonine modification. Residues 586–598 are calmodulin-binding; sequence IAVSAANRFKKIS.

It belongs to the protein kinase superfamily. CAMK Ser/Thr protein kinase family. In terms of assembly, may interact with centrin.

The protein resides in the cytoplasm. It catalyses the reaction L-seryl-[myosin light chain] + ATP = O-phospho-L-seryl-[myosin light chain] + ADP + H(+). It carries out the reaction L-threonyl-[myosin light chain] + ATP = O-phospho-L-threonyl-[myosin light chain] + ADP + H(+). Its function is as follows. Implicated in the level of global muscle contraction and cardiac function. Phosphorylates a specific serine in the N-terminus of a myosin light chain. The polypeptide is Myosin light chain kinase 2, skeletal/cardiac muscle (MYLK2) (Oryctolagus cuniculus (Rabbit)).